The chain runs to 101 residues: Interleukin-8 (101 aa).

An N-terminal signal peptide occupies residues 1–22; it reads MTSKLAVALLAAFLLSAALCEA. Intrachain disulfides connect cysteine 34–cysteine 61 and cysteine 36–cysteine 77.

The protein belongs to the intercrine alpha (chemokine CxC) family. As to quaternary structure, homodimer. Interacts with TNFAIP6 (via Link domain); this interaction interferes with chemokine binding to glycosaminoglycans.

The protein localises to the secreted. Its function is as follows. Chemotactic factor that mediates inflammatory response by attracting neutrophils, basophils, and T-cells to clear pathogens and protect the host from infection. Also plays an important role in neutrophil activation. Released in response to an inflammatory stimulus, exerts its effect by binding to the G-protein-coupled receptors CXCR1 and CXCR2, primarily found in neutrophils, monocytes and endothelial cells. G-protein heterotrimer (alpha, beta, gamma subunits) constitutively binds to CXCR1/CXCR2 receptor and activation by IL8 leads to beta and gamma subunits release from Galpha (GNAI2 in neutrophils) and activation of several downstream signaling pathways including PI3K and MAPK pathways. This chain is Interleukin-8 (CXCL8), found in Bos taurus (Bovine).